The sequence spans 389 residues: tRNA (cytosine(72)-C(5))-methyltransferase (389 aa).

The PUA domain occupies 92–167 (LPVVVANKYA…LAVEVTLPKF (76 aa)). S-adenosyl-L-methionine-binding positions include 209 to 215 (AAAPGGK), Asp233, Arg238, Asp260, Asp277, and Tyr304. The Nucleophile role is filled by Cys327.

The protein belongs to the class I-like SAM-binding methyltransferase superfamily. RsmB/NOP family.

The catalysed reaction is cytidine(72) in tRNA + S-adenosyl-L-methionine = 5-methylcytidine(72) in tRNA + S-adenosyl-L-homocysteine + H(+). The enzyme catalyses cytidine(72) in tRNA(Thr) + S-adenosyl-L-methionine = 5-methylcytidine(72) in tRNA(Thr) + S-adenosyl-L-homocysteine + H(+). It catalyses the reaction cytidine(72) in tRNA(Cys) + S-adenosyl-L-methionine = 5-methylcytidine(72) in tRNA(Cys) + S-adenosyl-L-homocysteine + H(+). S-adenosyl-L-methionine-dependent methyltransferase that specifically methylates the C5 position of cytosine 72 in several tRNAs. This modification appears to slightly promote the thermal stability of P.horikoshii tRNAs, but does not affect their amino acid accepting activity. Four elements in the acceptor stems of tRNAs are essential for substrate recognition by this enzyme: the target site C72, the 3'-CCA terminus, U73 or G73, and the second base pair C2:G71. The protein is tRNA (cytosine(72)-C(5))-methyltransferase of Pyrococcus horikoshii (strain ATCC 700860 / DSM 12428 / JCM 9974 / NBRC 100139 / OT-3).